The primary structure comprises 470 residues: Auxin transporter-like protein 3 (470 aa).

Residues 1-57 (MAAEKIETVVAGNYLEMEREEENISGNKKSSTKTKLSNFFWHGGSVYDAWFSCASNQ) lie on the Cytoplasmic side of the membrane. A helical membrane pass occupies residues 58 to 75 (VAQVLLTLPYSFSQLGMM). The Extracellular segment spans residues 76–77 (SG). Residues 78-98 (ILFQLFYGLMGSWTAYLISVL) form a helical membrane-spanning segment. The Cytoplasmic portion of the chain corresponds to 99–134 (YVEYRTRKEREKFDFRNHVIQWFEVLDGLLGKHWRN). A helical transmembrane segment spans residues 135 to 155 (LGLIFNCTFLLFGSVIQLIAC). Residues 156-170 (ASNIYYINDKLDKRT) are Extracellular-facing. A helical membrane pass occupies residues 171–191 (WTYIFGACCATTVFIPSFHNY). R192 is a topological domain (cytoplasmic). Residues 193 to 213 (IWSFLGLAMTTYTSWYLTIAS) form a helical membrane-spanning segment. At 214–230 (LLHGQAEDVKHSGPTTM) the chain is on the extracellular side. A helical transmembrane segment spans residues 231–251 (VLYFTGATNILYTFGGHAVTV). The Cytoplasmic segment spans residues 252 to 264 (EIMHAMWKPQKFK). Residues 265–285 (AIYLLATIYVLTLTLPSASAV) form a helical membrane-spanning segment. Residues 286-312 (YWAFGDKLLTHSNALSLLPKTGFRDTA) are Extracellular-facing. Residues 313 to 333 (VILMLIHQFITFGFASTPLYF) traverse the membrane as a helical segment. Residues 334–354 (VWEKLIGVHETKSMFKRAMAR) lie on the Cytoplasmic side of the membrane. The chain crosses the membrane as a helical span at residues 355-375 (LPVVVPIWFLAIIFPFFGPIN). Residue S376 is a topological domain, extracellular. Residues 377-397 (AVGSLLVSFTVYIIPALAHML) form a helical membrane-spanning segment. Topologically, residues 398–426 (TFAPAPSRENAVERPPRVVGGWMGTYCIN) are cytoplasmic. A helical membrane pass occupies residues 427–447 (IFVVVWVFVVGFGFGGWASMV). Residues 448–470 (NFVRQIDTFGLFTKCYQCPPHKP) are Extracellular-facing.

The protein belongs to the amino acid/polyamine transporter 2 family. Amino acid/auxin permease (AAAP) (TC 2.A.18.1) subfamily.

The protein resides in the cell membrane. Functionally, carrier protein involved in proton-driven auxin influx. Mediates the formation of auxin gradient from developing leaves (site of auxin biosynthesis) to tips by contributing to the loading of auxin in vascular tissues and facilitating acropetal (base to tip) auxin transport within inner tissues of the root apex, and basipetal (tip to base) auxin transport within outer tissues of the root apex. The chain is Auxin transporter-like protein 3 (LAX3) from Arabidopsis thaliana (Mouse-ear cress).